Consider the following 210-residue polypeptide: NADH dehydrogenase [ubiquinone] iron-sulfur protein 8, mitochondrial (210 aa).

The transit peptide at 1-34 (MRCLTTPVLLRALAQAARAGPPGGRSLHSSAVAA) directs the protein to the mitochondrion. 2 4Fe-4S ferredoxin-type domains span residues 102 to 131 (RRYP…IEAE) and 141 to 170 (TRYD…EGPN). 8 residues coordinate [4Fe-4S] cluster: Cys111, Cys114, Cys117, Cys121, Cys150, Cys153, Cys156, and Cys160.

This sequence belongs to the complex I 23 kDa subunit family. Core subunit of respiratory chain NADH dehydrogenase (Complex I) which is composed of 45 different subunits. This is a component of the iron-sulfur (IP) fragment of the enzyme. Interacts with RAB5IF. The cofactor is [4Fe-4S] cluster.

It is found in the mitochondrion inner membrane. The enzyme catalyses a ubiquinone + NADH + 5 H(+)(in) = a ubiquinol + NAD(+) + 4 H(+)(out). Core subunit of the mitochondrial membrane respiratory chain NADH dehydrogenase (Complex I) which catalyzes electron transfer from NADH through the respiratory chain, using ubiquinone as an electron acceptor. Essential for the catalytic activity and assembly of complex I. In Gorilla gorilla gorilla (Western lowland gorilla), this protein is NADH dehydrogenase [ubiquinone] iron-sulfur protein 8, mitochondrial (NDUFS8).